The sequence spans 770 residues: 1,4-alpha-glucan branching enzyme GlgB (770 aa).

The active-site Nucleophile is the Asp437. The active-site Proton donor is Glu488.

Belongs to the glycosyl hydrolase 13 family. GlgB subfamily. Monomer.

The catalysed reaction is Transfers a segment of a (1-&gt;4)-alpha-D-glucan chain to a primary hydroxy group in a similar glucan chain.. The protein operates within glycan biosynthesis; glycogen biosynthesis. Catalyzes the formation of the alpha-1,6-glucosidic linkages in glycogen by scission of a 1,4-alpha-linked oligosaccharide from growing alpha-1,4-glucan chains and the subsequent attachment of the oligosaccharide to the alpha-1,6 position. The chain is 1,4-alpha-glucan branching enzyme GlgB from Synechococcus sp. (strain JA-3-3Ab) (Cyanobacteria bacterium Yellowstone A-Prime).